The following is a 105-amino-acid chain: Probable tetrachloroethene reductive dehalogenase membrane anchor protein (105 aa).

The next 3 membrane-spanning stretches (helical) occupy residues 3–23 (IYDVLIWMALGMTALLIQYGI), 35–55 (IPLQICGFLANFFFIFALAWG), and 66–86 (AIGMGFIFFGGTALIPAIITY).

The protein belongs to the PceB family.

It is found in the cell membrane. May act as a membrane anchor for the tetrachloroethene reductive dehalogenase PceA. This is Probable tetrachloroethene reductive dehalogenase membrane anchor protein from Dehalobacter restrictus (strain DSM 9455 / PER-K23).